The primary structure comprises 91 residues: MALVEAVEPIIYGNTKTGISFDSITGAIIAGVVVGLAKTAFLGKFPDYVEVLIGVGLLFMYGQYDLLRGIGFVLTADGIYGLIKNYISTSS.

A run of 3 helical transmembrane segments spans residues 17-37 (TGISFDSITGAIIAGVVVGLA), 40-60 (AFLGKFPDYVEVLIGVGLLFM), and 69-89 (GIGFVLTADGIYGLIKNYIST).

Its subcellular location is the host membrane. The protein is Putative transmembrane protein ORF91a of Acidianus convivator (ABV).